The following is a 262-amino-acid chain: Type III pantothenate kinase (262 aa).

7–14 contributes to the ATP binding site; that stretch reads DIGNTRLK. Residues Y96 and 103-106 contribute to the substrate site; that span reads GSDR. Catalysis depends on D105, which acts as the Proton acceptor. T137 contacts ATP. T187 lines the substrate pocket.

The protein belongs to the type III pantothenate kinase family. In terms of assembly, homodimer. It depends on NH4(+) as a cofactor. K(+) serves as cofactor.

The protein localises to the cytoplasm. It catalyses the reaction (R)-pantothenate + ATP = (R)-4'-phosphopantothenate + ADP + H(+). The protein operates within cofactor biosynthesis; coenzyme A biosynthesis; CoA from (R)-pantothenate: step 1/5. In terms of biological role, catalyzes the phosphorylation of pantothenate (Pan), the first step in CoA biosynthesis. This chain is Type III pantothenate kinase, found in Leptothrix cholodnii (strain ATCC 51168 / LMG 8142 / SP-6) (Leptothrix discophora (strain SP-6)).